The chain runs to 82 residues: Teratocyte protein CftICK-IV (82 aa).

Positions 1-21 (MAKILLTFIILTCLIVTITPA) are cleaved as a signal peptide.

In terms of processing, contains 4 disulfide bonds. As to expression, abundantly expressed by teratocytes, which are extra-embryonic cells released by parasitoid wasps into their hosts during larval eclosion.

It is found in the secreted. In terms of biological role, this endoparasitoid wasp peptide has immununosuppressive and insecticidal activities. Suppress cellular immunity which is detectable as a reduction of hemocyte spread index in the host. In vivo, ingestion of this peptide moderately reduces leaf consumption of D.saccharalis, a permissive host for the lepidoptere C.flavipes. The protein is Teratocyte protein CftICK-IV of Cotesia flavipes (Parasitic wasp).